The sequence spans 283 residues: NAD kinase (283 aa).

Asp67 functions as the Proton acceptor in the catalytic mechanism. NAD(+) is bound by residues 67-68 (DG), 141-142 (ND), Arg152, Asp171, 182-187 (TAYSLS), and Gln241.

It belongs to the NAD kinase family. A divalent metal cation serves as cofactor.

The protein resides in the cytoplasm. The catalysed reaction is NAD(+) + ATP = ADP + NADP(+) + H(+). Its function is as follows. Involved in the regulation of the intracellular balance of NAD and NADP, and is a key enzyme in the biosynthesis of NADP. Catalyzes specifically the phosphorylation on 2'-hydroxyl of the adenosine moiety of NAD to yield NADP. This is NAD kinase from Heliobacterium modesticaldum (strain ATCC 51547 / Ice1).